Consider the following 213-residue polypeptide: High frequency lysogenization protein HflD homolog (213 aa).

Belongs to the HflD family.

It localises to the cytoplasm. The protein localises to the cell inner membrane. In Klebsiella pneumoniae (strain 342), this protein is High frequency lysogenization protein HflD homolog.